The chain runs to 913 residues: Alanine--tRNA ligase (913 aa).

Positions 608, 612, 711, and 715 each coordinate Zn(2+).

It belongs to the class-II aminoacyl-tRNA synthetase family. The cofactor is Zn(2+).

The protein localises to the cytoplasm. It catalyses the reaction tRNA(Ala) + L-alanine + ATP = L-alanyl-tRNA(Ala) + AMP + diphosphate. Its function is as follows. Catalyzes the attachment of alanine to tRNA(Ala) in a two-step reaction: alanine is first activated by ATP to form Ala-AMP and then transferred to the acceptor end of tRNA(Ala). Also edits incorrectly charged Ser-tRNA(Ala) and Gly-tRNA(Ala) via its editing domain. The chain is Alanine--tRNA ligase from Methanocorpusculum labreanum (strain ATCC 43576 / DSM 4855 / Z).